A 147-amino-acid chain; its full sequence is Deoxyuridine 5'-triphosphate nucleotidohydrolase (147 aa).

Residues Arg-68–Gly-70, Asn-81, and Thr-85–Asp-87 each bind substrate.

This sequence belongs to the dUTPase family. Mg(2+) is required as a cofactor.

The catalysed reaction is dUTP + H2O = dUMP + diphosphate + H(+). Its pathway is pyrimidine metabolism; dUMP biosynthesis; dUMP from dCTP (dUTP route): step 2/2. Its function is as follows. This enzyme is involved in nucleotide metabolism: it produces dUMP, the immediate precursor of thymidine nucleotides and it decreases the intracellular concentration of dUTP so that uracil cannot be incorporated into DNA. This is Deoxyuridine 5'-triphosphate nucleotidohydrolase from Solibacter usitatus (strain Ellin6076).